Reading from the N-terminus, the 532-residue chain is 56 kDa type-specific antigen (532 aa).

A signal peptide spans 1 to 22; sequence MKKIMLIASAMSALSLPFSASA. Residues 67–87 traverse the membrane as a helical segment; that stretch reads LTTGLPFGGTLAAGMTIAPGF. 2 disordered regions span residues 113-140 and 400-426; these read KGEI…PQPT and QQEE…SKEG. Residues 403–413 show a composition bias toward basic and acidic residues; the sequence is EDAKNQGKGDC. Residues 480–500 form a helical membrane-spanning segment; that stretch reads TGMVASGALGVAINAAEGVCV.

It is found in the cell membrane. Functionally, may be an adherent factor for rickettsial adsorption to the host-cell surface and a determinant of virulence of individual rickettsial strain. It is the major outer membrane protein. The protein is 56 kDa type-specific antigen of Orientia tsutsugamushi (Rickettsia tsutsugamushi).